Reading from the N-terminus, the 439-residue chain is MVKVLLVGGGGREHAIGEALVKGGAELYVVSKHKNPGLARIAKDYGLARETDVEKVVEFAEKWKVDFAFIGPEAPLEAGVVNALEERGIPAVGPTKEAARLETNKAWAREFMERNKIPGRKLFRVFDDPKEMKEWIDEFGKPVVVKPLGLTGGKGVKVVGYQLKDNEEAKEYAEYLIRKDGKVLIEERTDGVEFTFQVFSDGKKVVPMPLAQDYPHAYEGDVGPITGGMGSYSCSNHLLPFITKSDWEKALETLQKTVEAMYKEGYPYKGILYGQFMLSKDGPVIIEYNARFGDPEAINVLSILEDNLVEISERIIDGNLRDVKFSNMATVVKYIAPQGYPENPIKGVRIEVNEDKIREEGARLIFASIDENYTLLGSRALAVVGVSENLEEAEKIAQSAIRHVKGPIFYRKDVGTRESIEKRIKIMKSLRGDFDVNSC.

One can recognise an ATP-grasp domain in the interval 109–317; that stretch reads REFMERNKIP…LVEISERIID (209 aa). ATP is bound at residue 136–195; the sequence is IDEFGKPVVVKPLGLTGGKGVKVVGYQLKDNEEAKEYAEYLIRKDGKVLIEERTDGVEFT. Mg(2+) contacts are provided by Q275, E287, and N289. Q275, E287, and N289 together coordinate Mn(2+).

This sequence belongs to the GARS family. Requires Mg(2+) as cofactor. The cofactor is Mn(2+).

It catalyses the reaction 5-phospho-beta-D-ribosylamine + glycine + ATP = N(1)-(5-phospho-beta-D-ribosyl)glycinamide + ADP + phosphate + H(+). It participates in purine metabolism; IMP biosynthesis via de novo pathway; N(1)-(5-phospho-D-ribosyl)glycinamide from 5-phospho-alpha-D-ribose 1-diphosphate: step 2/2. The protein is Phosphoribosylamine--glycine ligase of Pyrococcus furiosus (strain ATCC 43587 / DSM 3638 / JCM 8422 / Vc1).